A 721-amino-acid polypeptide reads, in one-letter code: Kinesin-like protein KIF2C (721 aa).

Positions 1 to 250 (MESLHARLFP…CSPLTVTDPI (250 aa)) are globular. 2 positions are modified to phosphoserine: S3 and S19. S92 carries the post-translational modification Phosphoserine; by AURKB. Positions 95–98 (SKIP) match the Microtubule tip localization signal motif. A phosphoserine mark is found at S106, S108, S112, S162, S171, S183, and S188. The tract at residues 164–188 (EAEEQAHSTRSTSSANPGNSVRRKS) is disordered. A compositionally biased stretch (polar residues) spans 171-182 (STRSTSSANPGN). Residues 203 to 234 (EKRAQNSELRIKRAQEYDSSFPNWEFARMIKE) form a negative regulator of microtubule-binding region. One can recognise a Kinesin motor domain in the interval 254 to 584 (RICVCVRKRP…LRYADRVKEL (331 aa)). ATP-binding positions include R260 and 344–351 (GQTGSGKT). Phosphoserine occurs at positions 515 and 626. Residues 614–652 (GNEEEELSSQMSSFNEAMTQIRELEERALEELREIIQQG) adopt a coiled-coil conformation.

The protein belongs to the TRAFAC class myosin-kinesin ATPase superfamily. Kinesin family. MCAK/KIF2 subfamily. As to quaternary structure, interacts with CENPH. Interacts with MTUS2/TIP150; the interaction is direct. Interacts with MAPRE1; the interaction is direct, regulated by phosphorylation and is probably required for targeting to growing microtubule plus ends. Interacts with KIF18B at microtubule tips; this interaction increases the affinity of both partners for microtubule plus ends and is required for robust microtubule depolymerization. Phosphorylation by AURKA or AURKB strongly reduces KIF18B-binding. Post-translationally, phosphorylation by AURKB, regulates association with centromeres and kinetochores and the microtubule depolymerization activity. Ubiquitinated.

The protein resides in the cytoplasm. It is found in the cytoskeleton. It localises to the nucleus. Its subcellular location is the chromosome. The protein localises to the centromere. The protein resides in the kinetochore. Its function is as follows. In complex with KIF18B, constitutes the major microtubule plus-end depolymerizing activity in mitotic cells. Regulates the turnover of microtubules at the kinetochore and functions in chromosome segregation during mitosis. Plays a role in chromosome congression and is required for the lateral to end-on conversion of the chromosome-microtubule attachment. This is Kinesin-like protein KIF2C (Kif2c) from Mus musculus (Mouse).